Reading from the N-terminus, the 291-residue chain is Elongation factor Ts (291 aa).

The interval 79-82 (TDFV) is involved in Mg(2+) ion dislocation from EF-Tu.

This sequence belongs to the EF-Ts family.

The protein resides in the cytoplasm. Its function is as follows. Associates with the EF-Tu.GDP complex and induces the exchange of GDP to GTP. It remains bound to the aminoacyl-tRNA.EF-Tu.GTP complex up to the GTP hydrolysis stage on the ribosome. The polypeptide is Elongation factor Ts (Anaplasma marginale (strain St. Maries)).